Here is a 30-residue protein sequence, read N- to C-terminus: GDDVKSACCDTCLCTKSNPPICRCVDIRET.

2 cysteine pairs are disulfide-bonded: cysteine 9–cysteine 24 and cysteine 14–cysteine 22.

Inhibits trypsin (IC(50)=17.60 nM) and, to a lesser extent, alpha-chymotrypsin (IC(50)=2.38 uM). The protein is Bowman-Birk type proteinase inhibitor 4 of Lathyrus sativus (White vetchling).